The primary structure comprises 491 residues: Glucose-6-phosphate exchanger SLC37A2 (491 aa).

The chain crosses the membrane as a helical span at residues 5-25 (LAPGIWYRAFILLITFLIYTC). N-linked (GlcNAc...) asparagine glycans are attached at residues asparagine 43, asparagine 52, and asparagine 58. Transmembrane regions (helical) follow at residues 78 to 98 (GAVDNAFLVAYAIGMFISGIF), 108 to 130 (LTAGMLLSGLFTSLFGLGYFWNI), 132 to 154 (VLWYFVLVQIFNGLVQTTGWPAV), 169 to 189 (LIMGIWNSHTSVGNILGSLLA), and 200 to 220 (SFVVPGVITAIMGIITFFFLI). The disordered stretch occupies residues 229–257 (SPPQHHGNPEESQDQPEDPANGPSCNKES). 6 consecutive transmembrane segments (helical) span residues 292-312 (LCLLFAKLVSYTFLYWLPLYI), 328-348 (TLFDVGGIIGGILAGLVSDYI), 352-372 (ATTCCVMLILAAPMMFLYNHV), 377-397 (IGISIVMLLICGALVNGPYAL), 424-444 (AIIDGTGSIGAALGPLLAGLI), and 452-472 (VFYMLIAADVLACLLLCRLVY).

The protein belongs to the major facilitator superfamily. Organophosphate:Pi antiporter (OPA) (TC 2.A.1.4) family.

The protein resides in the endoplasmic reticulum membrane. It carries out the reaction D-glucose 6-phosphate(in) + phosphate(out) = D-glucose 6-phosphate(out) + phosphate(in). With respect to regulation, inhibited by vanadate but not by chlorogenic acid. In terms of biological role, inorganic phosphate and glucose-6-phosphate antiporter. May transport cytoplasmic glucose-6-phosphate into the lumen of the endoplasmic reticulum and translocate inorganic phosphate into the opposite direction. Independent of a lumenal glucose-6-phosphatase. May not play a role in homeostatic regulation of blood glucose levels. In Bos taurus (Bovine), this protein is Glucose-6-phosphate exchanger SLC37A2.